The following is a 1110-amino-acid chain: Serine/threonine-protein kinase PknK (1110 aa).

The Protein kinase domain maps to 26-283 (FDNVEEIGRG…TAADVGEELR (258 aa)). Residues 32–40 (IGRGGFGVV) and Lys55 each bind ATP. Asp149 (proton acceptor) is an active-site residue. Mg(2+) is bound by residues Asn154 and Asp167. Thr179 and Thr181 each carry phosphothreonine; by autocatalysis. Residues 308–343 (RSPEAHAAHRHTGGGTPTVPTPPTPATKYRPSVPTG) are disordered.

It belongs to the protein kinase superfamily. Ser/Thr protein kinase family. In terms of assembly, forms oligomeric complexes in solution. In terms of processing, can autophosphorylate the carboxyl terminal region in addition to Thr-179 and Thr-181.

It is found in the cytoplasm. It localises to the cell membrane. Its subcellular location is the secreted. The protein resides in the cell wall. It carries out the reaction L-seryl-[protein] + ATP = O-phospho-L-seryl-[protein] + ADP + H(+). The enzyme catalyses L-threonyl-[protein] + ATP = O-phospho-L-threonyl-[protein] + ADP + H(+). In terms of biological role, key microbial factor involved in regulation of early and late events in tuberculosis infection, and in host-pathogen interactions. This Mycobacterium tuberculosis (strain CDC 1551 / Oshkosh) protein is Serine/threonine-protein kinase PknK (pknK).